We begin with the raw amino-acid sequence, 512 residues long: MAAPMDCLESLEGDGDAGRRASGVEVALPSNPTAPAPLCPHGPTLLFVKVNQGKEETRKFYACSACRDRKDCNFFQWEDEKLSEARLAAREIHNQKCQPPLSRAQCIERYLSFIQLPLAQRKFCQSCQQLLLPADWREHGTHQLSADISVAQLGRPSQLLYPLENKKTHAQYLFADRSCQFLAGLLATLGFSRVLCVGAPRLHEQIRLTASGERSGMRSLLLDIDFRYSQFYLEGSFCRYNMFNHHFFDGKAALEVCKEFLQEEEGKGVIMVTDPPFGGLVEPLAITFKKLIAMWKEGQSQDDSHKELPIFWIFPYFFESRICQFFPSFCMLDYQVDYDNHALYKHGKTGRKQSPVRIFTNVPPNKIILPSEEGYRFCSLCQRYVSRENQHCVHCNSCTSKDGRKWSHCFLCKKCVKPSWIHCNTCNRCALPDHSCLGPKDGCFICGALDHKRSNCPNIGTSWRANKLVEFFGFLEKRLLMSSFLGAIYRSTKLSEDSEFFRVLNRSSHHYV.

Residues C39, H41, C63, C72, C124, C127, H139, and H142 each coordinate Zn(2+). A GRF-type zinc finger spans residues 39-81 (CPHGPTLLFVKVNQGKEETRKFYACSACRDRKDCNFFQWEDEK). Residues 171–174 (QYLF), R201, D223, 241–242 (NM), and D274 each bind S-adenosyl-L-methionine. Positions 335 to 355 (QVDYDNHALYKHGKTGRKQSP) are regulatory loop. Residues C378, C381, H391, C392, C395, C398, H408, C409, C412, C415, H422, C423, C426, C429, H434, and C436 each contribute to the Zn(2+) site. One can recognise a DHHC domain in the interval 393 to 445 (VHCNSCTSKDGRKWSHCFLCKKCVKPSWIHCNTCNRCALPDHSCLGPKDGCFI). Residues 441-458 (DGCFICGALDHKRSNCPN) form a CCHC-type zinc finger.

Belongs to the ZCCHC4 family. In terms of assembly, interacts with components of the ASC-1 complex TRIP4, ASCC1, ASCC2 and ASCC3. Interact with AHCYL1 and AHCYL2. Interact with YTHDC2.

Its subcellular location is the cytoplasm. It is found in the nucleus. It localises to the nucleolus. It catalyses the reaction adenosine(4220) in 28S rRNA + S-adenosyl-L-methionine = N(6)-methyladenosine(4220) in 28S rRNA + S-adenosyl-L-homocysteine + H(+). In terms of biological role, rRNA N6-methyltransferase that specifically methylates the adenine in position 4220 of 28S rRNA. N6-methylation of adenine(4220) in 28S rRNA is required for translation. The chain is rRNA N(6)-adenosine-methyltransferase ZCCHC4 from Mus musculus (Mouse).